The chain runs to 130 residues: Small ribosomal subunit protein uS17m (130 aa).

A mitochondrion-targeting transit peptide spans 1-20 (MSVVRSSVHARWIVGKVIGT).

It belongs to the universal ribosomal protein uS17 family. Component of the mitochondrial small ribosomal subunit (mt-SSU). Mature mammalian 55S mitochondrial ribosomes consist of a small (28S) and a large (39S) subunit. The 28S small subunit contains a 12S ribosomal RNA (12S mt-rRNA) and 30 different proteins. The 39S large subunit contains a 16S rRNA (16S mt-rRNA), a copy of mitochondrial valine transfer RNA (mt-tRNA(Val)), which plays an integral structural role, and 52 different proteins.

The protein resides in the mitochondrion. The protein is Small ribosomal subunit protein uS17m (MRPS17) of Homo sapiens (Human).